The sequence spans 608 residues: Chaperone protein HtpG (608 aa).

The interval 1-332 (MQFQTEVNQL…VEDLPLNVSR (332 aa)) is a; substrate-binding. The b stretch occupies residues 333-536 (EILQENQILK…KNKLDFAMQQ (204 aa)). A c region spans residues 537–608 (LLKQMGQEQN…LTKIINKAFS (72 aa)).

Belongs to the heat shock protein 90 family. As to quaternary structure, homodimer.

The protein resides in the cytoplasm. Its function is as follows. Molecular chaperone. Has ATPase activity. The chain is Chaperone protein HtpG from Campylobacter jejuni subsp. doylei (strain ATCC BAA-1458 / RM4099 / 269.97).